We begin with the raw amino-acid sequence, 155 residues long: Phosphopantetheine adenylyltransferase (155 aa).

Belongs to the eukaryotic CoaD family.

It is found in the cytoplasm. The enzyme catalyses (R)-4'-phosphopantetheine + ATP + H(+) = 3'-dephospho-CoA + diphosphate. It functions in the pathway cofactor biosynthesis; coenzyme A biosynthesis. Reversibly transfers an adenylyl group from ATP to 4'-phosphopantetheine, yielding dephospho-CoA (dPCoA) and pyrophosphate. The sequence is that of Phosphopantetheine adenylyltransferase from Pyrobaculum aerophilum (strain ATCC 51768 / DSM 7523 / JCM 9630 / CIP 104966 / NBRC 100827 / IM2).